We begin with the raw amino-acid sequence, 143 residues long: uncharacterized protein (143 aa).

Its subcellular location is the cytoplasm. It is found in the nucleus. This is an uncharacterized protein from Schizosaccharomyces pombe (strain 972 / ATCC 24843) (Fission yeast).